Reading from the N-terminus, the 5100-residue chain is Hemicentin-2 (5100 aa).

Residues 1–19 (MTPGAQLLPLLVAISTAVA) form the signal peptide. The VWFA domain maps to 37-211 (DATLAFVFDV…QVSEVLKWVE (175 aa)). N-linked (GlcNAc...) asparagine glycosylation is found at N330, N347, N380, N479, N526, N548, and N675. Ig-like C2-type domains follow at residues 426–515 (PGVP…IVIT), 517–601 (PPPQ…RATT), 609–692 (PQVS…ETVT), 699–782 (PSVS…IQLV), 787–877 (PRLT…LVVT), 882–968 (PQIA…VELV), 973–1058 (PRIH…MWLS), 1063–1156 (PMIK…YVLR), 1161–1239 (PQVQ…WKLE), 1246–1335 (PHWG…AKLV), 1340–1437 (PSIR…FNLA), 1442–1531 (PSLL…FQLS), 1536–1624 (PTIW…TSLE), 1629–1717 (PTIE…YSVE), 1722–1810 (PQLL…VEVS), 1825–1913 (SAHH…KDVT), 1920–2008 (PNIE…LRVN), 2011–2100 (PRIT…VILQ), 2105–2189 (PSIL…KHFN), 2196–2285 (PAFP…QSLE), 2290–2379 (PQVT…FALS), 2384–2473 (PHLT…FSVE), 2478–2566 (PSIE…TQLS), 2571–2662 (PTIL…YHVE), 2667–2758 (PSIS…QDFN), 2781–2871 (PHEE…YELL), 2875–2964 (PPVI…KLFT), 2971–3058 (PQIS…VQLN), 3063–3153 (PSFK…FVLA), 3157–3245 (PPTF…FVVS), 3250–3340 (PQIQ…HTVN), 3345–3432 (PTIK…RNFT), 3438–3523 (PPIL…FQLT), 3528–3609 (PHIE…FRVR), 3614–3702 (PNVV…FRVE), 3707–3793 (PTIQ…LDLR), 3798–3886 (PAIA…YQVT), 3891–3977 (PTIA…MVLT), 3982–4067 (PVVK…TRLV), 4071–4158 (PPVI…VHLT), 4163–4244 (PVLT…QAVS), 4252–4336 (PVLQ…KVVT), and 4343–4428 (PVFQ…ALLA). C449 and C497 form a disulfide bridge. Disulfide bonds link C539–C588, C630–C678, C720–C766, C808–C859, C903–C952, and C994–C1042. Omega-N-methylarginine occurs at positions 909, 914, and 915. N1024 and N1068 each carry an N-linked (GlcNAc...) asparagine glycan. Cystine bridges form between C1091/C1140 and C1182/C1225. N-linked (GlcNAc...) asparagine glycosylation is present at N1264. Residues 1265 to 1293 (ASLPCPAQGTPKPRITWRRGPSSEPLNGR) are disordered. C1269 and C1319 are oxidised to a cystine. Residue N1350 is glycosylated (N-linked (GlcNAc...) asparagine). 2 disulfides stabilise this stretch: C1363–C1421 and C1465–C1515. N-linked (GlcNAc...) asparagine glycosylation is present at N1542. Disulfide bonds link C1559–C1608, C1653–C1701, C1745–C1794, and C1846–C1899. 2 N-linked (GlcNAc...) asparagine glycosylation sites follow: N1676 and N1787. N-linked (GlcNAc...) asparagine glycosylation occurs at N1934. 2 disulfide bridges follow: C1941–C1990 and C2033–C2084. N2034, N2113, and N2119 each carry an N-linked (GlcNAc...) asparagine glycan. 2 cysteine pairs are disulfide-bonded: C2126/C2175 and C2218/C2269. N2309, N2315, N2345, and N2395 each carry an N-linked (GlcNAc...) asparagine glycan. An intrachain disulfide couples C2314 to C2363. C2408 and C2457 are oxidised to a cystine. Residues N2469, N2502, N2541, N2606, and N2688 are each glycosylated (N-linked (GlcNAc...) asparagine). Intrachain disulfides connect C2501/C2550 and C2597/C2646. Intrachain disulfides connect C2695–C2744 and C2806–C2855. A glycan (N-linked (GlcNAc...) asparagine) is linked at N2892. The cysteines at positions 2901 and 2950 are disulfide-linked. N2986 is a glycosylation site (N-linked (GlcNAc...) asparagine). 5 cysteine pairs are disulfide-bonded: C2993–C3042, C3088–C3137, C3180–C3229, C3273–C3324, and C3369–C3418. An N-linked (GlcNAc...) asparagine glycan is attached at N3430. 3 disulfide bridges follow: C3462–C3507, C3551–C3593, and C3637–C3686. N-linked (GlcNAc...) asparagine glycans are attached at residues N3560 and N3575. N-linked (GlcNAc...) asparagine glycans are attached at residues N3717 and N3721. A disulfide bond links C3728 and C3777. N3806 is a glycosylation site (N-linked (GlcNAc...) asparagine). 7 cysteine pairs are disulfide-bonded: C3819/C3870, C3912/C3961, C4003/C4051, C4093/C4142, C4184/C4231, C4274/C4322, and C4364/C4412. The N-linked (GlcNAc...) asparagine glycan is linked to N4304. The Nidogen G2 beta-barrel domain occupies 4432-4654 (EPRGSRGSMT…QTEENEVGCP (223 aa)). N-linked (GlcNAc...) asparagine glycosylation is found at N4455 and N4601. The 41-residue stretch at 4668 to 4708 (DKDECSGGPSPCSHTCRNAPGHFSCSCPTGFSLAWDHRNCR) folds into the EGF-like 1; calcium-binding domain. Intrachain disulfides connect C4672-C4683, C4679-C4692, C4694-C4707, C4713-C4726, C4720-C4735, C4739-C4752, C4758-C4771, C4765-C4780, C4801-C4812, C4808-C4821, and C4823-C4836. In terms of domain architecture, EGF-like 2; calcium-binding spans 4709–4753 (DVDECAGNTHLCQEEQRCVNLLGSYNCLASCRPGFRVTADGSNCE). Residues 4754–4789 (DVDECLEQLDECHYNQLCENTPGGHHCGCPRGYRQQ) enclose the EGF-like 3; calcium-binding domain. The 41-residue stretch at 4797–4837 (DINECLQLPTPCVYQCQNLQGSYRCLCPPGQTLLRDGRTCI) folds into the EGF-like 4; calcium-binding domain. An N-linked (GlcNAc...) asparagine glycan is attached at N4845. The EGF-like 5; calcium-binding domain occupies 4904–4943 (DLDECRVRSLCQHACQNTEGSYYCLCPSGYRLLPSGKNCQ). 3 disulfide bridges follow: C4908–C4918, C4914–C4927, and C4929–C4942. N5035 carries an N-linked (GlcNAc...) asparagine glycan.

Reported to be phosphorylated; however as this position is extracellular, the in vivo relevance is unsure. In terms of tissue distribution, in neonatal skin, localized in the pericellular space of basal epidermal keratinocytes (at protein level). In adult skin, restricted to basal keratinocytes of hair follicles and the interfollicular epidermis. Absent from the myotendinous junction but present in skeletal muscle (at protein level). Expressed in the pericellular extracellular matrix of epithelial cells in a number of tissues including embryonic trophectoderm and adult skin and tongue. Also present in the extracellular matrix of some, but not all, blood vessels. Expressed primarily in epithelial cells in the embryonic epidermis, lung, intestine, skeletal hindlimb muscle, tongue and the muscular layers of the esophagus.

The protein resides in the secreted. It localises to the extracellular space. It is found in the extracellular matrix. The protein localises to the cleavage furrow. The polypeptide is Hemicentin-2 (Hmcn2) (Mus musculus (Mouse)).